Reading from the N-terminus, the 388-residue chain is Acyl-CoA dehydrogenase fadE12 (388 aa).

It belongs to the acyl-CoA dehydrogenase family. Requires FAD as cofactor.

The enzyme catalyses a 2,3-saturated acyl-CoA + A = a 2,3-dehydroacyl-CoA + AH2. The polypeptide is Acyl-CoA dehydrogenase fadE12 (fadE12) (Mycobacterium tuberculosis (strain CDC 1551 / Oshkosh)).